The following is a 339-amino-acid chain: tRNA(Ile)-lysidine synthase (339 aa).

Position 34–39 (34–39) interacts with ATP; the sequence is SGGPDS.

The protein belongs to the tRNA(Ile)-lysidine synthase family.

Its subcellular location is the cytoplasm. It carries out the reaction cytidine(34) in tRNA(Ile2) + L-lysine + ATP = lysidine(34) in tRNA(Ile2) + AMP + diphosphate + H(+). In terms of biological role, ligates lysine onto the cytidine present at position 34 of the AUA codon-specific tRNA(Ile) that contains the anticodon CAU, in an ATP-dependent manner. Cytidine is converted to lysidine, thus changing the amino acid specificity of the tRNA from methionine to isoleucine. The sequence is that of tRNA(Ile)-lysidine synthase from Methylobacterium nodulans (strain LMG 21967 / CNCM I-2342 / ORS 2060).